A 447-amino-acid polypeptide reads, in one-letter code: Protein odr-4 homolog (447 aa).

2 helical membrane-spanning segments follow: residues 82-102 and 425-445; these read MLPG…ELAD and IGVI…FHYF.

This sequence belongs to the ODR-4 family. As to expression, ubiquitously expressed.

It localises to the membrane. Its function is as follows. May play a role in the trafficking of a subset of G-protein coupled receptors. The protein is Protein odr-4 homolog (Odr4) of Mus musculus (Mouse).